The sequence spans 149 residues: Calmodulin-2 (149 aa).

Position 2 is an N-acetylalanine (Ala2). EF-hand domains are found at residues 8 to 43, 44 to 79, 81 to 116, and 117 to 149; these read EQIAEFKEAFSLFDKDGDGCITTKELGTVMRSLGQN, PTEAELQDMISEVDADQNGTIDFPEFLNLMARKMKD, DSEEELKEAFKVFDKDQNGYISAADVRHVMTNLGEK, and LTDEEVDEMIREADMDGDGQVNYEEFVRMMLAK. Positions 21, 23, 25, 27, 32, 57, 59, 61, 63, 68, 94, 96, 98, 100, and 105 each coordinate Ca(2+). Lys116 carries the N6,N6,N6-trimethyllysine modification. Positions 130, 132, 134, 136, and 141 each coordinate Ca(2+).

It belongs to the calmodulin family.

Calmodulin mediates the control of a large number of enzymes, ion channels and other proteins by Ca(2+). Among the enzymes to be stimulated by the calmodulin-Ca(2+) complex are a number of protein kinases and phosphatases. This is Calmodulin-2 (CAM72) from Petunia hybrida (Petunia).